The chain runs to 626 residues: tRNA 5-methylaminomethyl-2-thiouridine biosynthesis bifunctional protein MnmC (626 aa).

The interval 1 to 237 is tRNA (mnm(5)s(2)U34)-methyltransferase; that stretch reads MKGPQLDYAD…KRDMTVGVFQ (237 aa). Residues 255–626 are FAD-dependent cmnm(5)s(2)U34 oxidoreductase; sequence IGSGLSGANV…RVLPNRFSQE (372 aa).

This sequence in the N-terminal section; belongs to the methyltransferase superfamily. tRNA (mnm(5)s(2)U34)-methyltransferase family. It in the C-terminal section; belongs to the DAO family. FAD is required as a cofactor.

Its subcellular location is the cytoplasm. The catalysed reaction is 5-aminomethyl-2-thiouridine(34) in tRNA + S-adenosyl-L-methionine = 5-methylaminomethyl-2-thiouridine(34) in tRNA + S-adenosyl-L-homocysteine + H(+). In terms of biological role, catalyzes the last two steps in the biosynthesis of 5-methylaminomethyl-2-thiouridine (mnm(5)s(2)U) at the wobble position (U34) in tRNA. Catalyzes the FAD-dependent demodification of cmnm(5)s(2)U34 to nm(5)s(2)U34, followed by the transfer of a methyl group from S-adenosyl-L-methionine to nm(5)s(2)U34, to form mnm(5)s(2)U34. This chain is tRNA 5-methylaminomethyl-2-thiouridine biosynthesis bifunctional protein MnmC, found in Hahella chejuensis (strain KCTC 2396).